Here is a 414-residue protein sequence, read N- to C-terminus: Multifunctional CCA protein (414 aa).

ATP is bound by residues glycine 8 and arginine 11. Glycine 8 and arginine 11 together coordinate CTP. Mg(2+) contacts are provided by aspartate 21 and aspartate 23. 3 residues coordinate ATP: arginine 91, arginine 137, and arginine 140. Residues arginine 91, arginine 137, and arginine 140 each contribute to the CTP site. Positions 228 to 329 (TGIHTLMTLA…LKLFDAVDVW (102 aa)) constitute an HD domain.

Belongs to the tRNA nucleotidyltransferase/poly(A) polymerase family. Bacterial CCA-adding enzyme type 1 subfamily. Monomer. Can also form homodimers and oligomers. Mg(2+) is required as a cofactor. It depends on Ni(2+) as a cofactor.

It catalyses the reaction a tRNA precursor + 2 CTP + ATP = a tRNA with a 3' CCA end + 3 diphosphate. It carries out the reaction a tRNA with a 3' CCA end + 2 CTP + ATP = a tRNA with a 3' CCACCA end + 3 diphosphate. In terms of biological role, catalyzes the addition and repair of the essential 3'-terminal CCA sequence in tRNAs without using a nucleic acid template. Adds these three nucleotides in the order of C, C, and A to the tRNA nucleotide-73, using CTP and ATP as substrates and producing inorganic pyrophosphate. tRNA 3'-terminal CCA addition is required both for tRNA processing and repair. Also involved in tRNA surveillance by mediating tandem CCA addition to generate a CCACCA at the 3' terminus of unstable tRNAs. While stable tRNAs receive only 3'-terminal CCA, unstable tRNAs are marked with CCACCA and rapidly degraded. The polypeptide is Multifunctional CCA protein (Serratia proteamaculans (strain 568)).